Here is a 481-residue protein sequence, read N- to C-terminus: Glucokinase-1 (481 aa).

In terms of domain architecture, Hexokinase spans 4–477 (PKLTKAVDSI…SGVGAALCAL (474 aa)). The interval 64-204 (SGQEHGVTML…LSNVHVVALT (141 aa)) is hexokinase small subdomain. Residue Lys-101 participates in ATP binding. Residues 146 to 172 (KMGFTFSYPVDQTSLSSGKLIRWTKGF) form a glucose-binding region. Residues 205–466 (NDTTGTLLAR…RDVHLRISKD (262 aa)) form a hexokinase large subdomain region. 466-471 (DGSGVG) provides a ligand contact to ATP.

Belongs to the hexokinase family.

It catalyses the reaction D-glucose + ATP = D-glucose 6-phosphate + ADP + H(+). The catalysed reaction is a D-hexose + ATP = a D-hexose 6-phosphate + ADP + H(+). The enzyme catalyses D-mannose + ATP = D-mannose 6-phosphate + ADP + H(+). Its pathway is carbohydrate metabolism; hexose metabolism. It participates in carbohydrate degradation; glycolysis; D-glyceraldehyde 3-phosphate and glycerone phosphate from D-glucose: step 1/4. Functionally, glukokinase specific for aldohexoses. Phosphorylates glucose and mannose, but not fructose. The polypeptide is Glucokinase-1 (GLK1) (Kluyveromyces lactis (strain ATCC 8585 / CBS 2359 / DSM 70799 / NBRC 1267 / NRRL Y-1140 / WM37) (Yeast)).